A 418-amino-acid chain; its full sequence is UDP-N-acetylglucosamine 1-carboxyvinyltransferase (418 aa).

Residue 22 to 23 (KN) coordinates phosphoenolpyruvate. Arginine 92 lines the UDP-N-acetyl-alpha-D-glucosamine pocket. Catalysis depends on cysteine 116, which acts as the Proton donor. 2-(S-cysteinyl)pyruvic acid O-phosphothioketal is present on cysteine 116. Aspartate 306 and isoleucine 328 together coordinate UDP-N-acetyl-alpha-D-glucosamine.

Belongs to the EPSP synthase family. MurA subfamily.

It is found in the cytoplasm. It carries out the reaction phosphoenolpyruvate + UDP-N-acetyl-alpha-D-glucosamine = UDP-N-acetyl-3-O-(1-carboxyvinyl)-alpha-D-glucosamine + phosphate. Its pathway is cell wall biogenesis; peptidoglycan biosynthesis. Functionally, cell wall formation. Adds enolpyruvyl to UDP-N-acetylglucosamine. This is UDP-N-acetylglucosamine 1-carboxyvinyltransferase from Shewanella amazonensis (strain ATCC BAA-1098 / SB2B).